We begin with the raw amino-acid sequence, 176 residues long: NAD(P)H-quinone oxidoreductase subunit 6, chloroplastic (176 aa).

Transmembrane regions (helical) follow at residues 10-30 (FLLVFLGLGLILGGIGVVLLT), 32-52 (PIYSAFSLGLVLVCISLLYIL), 61-81 (AQLLIYVGAINVLIIFAVMFM), 92-112 (LWTVGNGFTLLICTSIFGLLI), and 152-172 (FFLPFEFISIILLAALIGAIT).

This sequence belongs to the complex I subunit 6 family. As to quaternary structure, NDH is composed of at least 16 different subunits, 5 of which are encoded in the nucleus.

It localises to the plastid. It is found in the chloroplast thylakoid membrane. The enzyme catalyses a plastoquinone + NADH + (n+1) H(+)(in) = a plastoquinol + NAD(+) + n H(+)(out). The catalysed reaction is a plastoquinone + NADPH + (n+1) H(+)(in) = a plastoquinol + NADP(+) + n H(+)(out). NDH shuttles electrons from NAD(P)H:plastoquinone, via FMN and iron-sulfur (Fe-S) centers, to quinones in the photosynthetic chain and possibly in a chloroplast respiratory chain. The immediate electron acceptor for the enzyme in this species is believed to be plastoquinone. Couples the redox reaction to proton translocation, and thus conserves the redox energy in a proton gradient. This is NAD(P)H-quinone oxidoreductase subunit 6, chloroplastic (ndhG) from Morus indica (Mulberry).